Consider the following 783-residue polypeptide: Rho GTPase-activating protein gacR (783 aa).

Residues 138-188 (AKNRFDKARLSFDEASEQFKQLRKKQNNINNEKLLEAEEDLDYATQQFSDI) are a coiled coil. Residues 262 to 299 (QFEQTNSSRTISLPPPPPPKPTSSTPSSSPSPSPSSSI) form a disordered region. Residues 283–299 (TSSTPSSSPSPSPSSSI) show a composition bias toward low complexity. The 191-residue stretch at 319–509 (MALSTITERE…FIISNFNNIF (191 aa)) folds into the Rho-GAP domain. Positions 527 to 539 (GSSGGGGGGGSSG) are enriched in gly residues. Positions 527 to 745 (GSSGGGGGGG…TTNSRPLSNS (219 aa)) are disordered. 4 stretches are compositionally biased toward low complexity: residues 568–589 (SVNT…ASSA), 599–630 (PSSS…NINP), 641–651 (PKKISSSSNSL), and 661–698 (SIPE…RSST). The span at 706–738 (NRVSMYLQNSNTGVPLPSQKPQRVISNNNTTTN) shows a compositional bias: polar residues.

Its subcellular location is the cytoplasm. In terms of biological role, rho GTPase-activating protein involved in the signal transduction pathway. The protein is Rho GTPase-activating protein gacR (gacR) of Dictyostelium discoideum (Social amoeba).